Here is a 93-residue protein sequence, read N- to C-terminus: Bublin coiled-coil protein (93 aa).

2 disordered regions span residues 1-26 and 74-93; these read MAGP…GDTF and QQQS…QPPA. Acidic residues predominate over residues 17 to 26; sequence DEGDEGGDTF. A coiled-coil region spans residues 59–80; the sequence is LKELLESNRQTRLEFQQQSKQL.

Belongs to the UPF0184 (EST00098) family.

The protein localises to the cell junction. The protein resides in the cytoplasm. It localises to the cytoskeleton. Functionally, essential for intermediate filament organization in intestinal cells, interacts with intermediate filament and regulates intestinal lumen morphology. This Taeniopygia guttata (Zebra finch) protein is Bublin coiled-coil protein (BBLN).